The following is a 302-amino-acid chain: tRNA-cytidine(32) 2-sulfurtransferase (302 aa).

Positions 57–62 match the PP-loop motif motif; it reads SGGKDS. The [4Fe-4S] cluster site is built by Cys132, Cys135, and Cys223.

This sequence belongs to the TtcA family. As to quaternary structure, homodimer. Mg(2+) serves as cofactor. The cofactor is [4Fe-4S] cluster.

The protein localises to the cytoplasm. It carries out the reaction cytidine(32) in tRNA + S-sulfanyl-L-cysteinyl-[cysteine desulfurase] + AH2 + ATP = 2-thiocytidine(32) in tRNA + L-cysteinyl-[cysteine desulfurase] + A + AMP + diphosphate + H(+). It functions in the pathway tRNA modification. Its function is as follows. Catalyzes the ATP-dependent 2-thiolation of cytidine in position 32 of tRNA, to form 2-thiocytidine (s(2)C32). The sulfur atoms are provided by the cysteine/cysteine desulfurase (IscS) system. The chain is tRNA-cytidine(32) 2-sulfurtransferase from Marinobacter nauticus (strain ATCC 700491 / DSM 11845 / VT8) (Marinobacter aquaeolei).